The primary structure comprises 108 residues: DNA-directed RNA polymerase subunit omega (108 aa).

Positions Met-1–Gly-32 are disordered.

This sequence belongs to the RNA polymerase subunit omega family. In terms of assembly, the RNAP catalytic core consists of 2 alpha, 1 beta, 1 beta' and 1 omega subunit. When a sigma factor is associated with the core the holoenzyme is formed, which can initiate transcription.

The enzyme catalyses RNA(n) + a ribonucleoside 5'-triphosphate = RNA(n+1) + diphosphate. Promotes RNA polymerase assembly. Latches the N- and C-terminal regions of the beta' subunit thereby facilitating its interaction with the beta and alpha subunits. The polypeptide is DNA-directed RNA polymerase subunit omega (Mycobacterium avium (strain 104)).